Here is a 114-residue protein sequence, read N- to C-terminus: Anti-sigma-B factor antagonist (114 aa).

The region spanning 4–114 (SIEIKERDTD…VEGEMNGNNA (111 aa)) is the STAS domain. The residue at position 58 (Ser58) is a Phosphoserine.

Belongs to the anti-sigma-factor antagonist family. Phosphorylated by RsbW on a serine residue.

Its function is as follows. Positive regulator of sigma-B activity. Non-phosphorylated RsbV binds to RsbW, preventing its association with sigma-B. When phosphorylated, releases RsbW, which is then free to complex with and inactivate sigma-B. The sequence is that of Anti-sigma-B factor antagonist (rsbV) from Listeria innocua serovar 6a (strain ATCC BAA-680 / CLIP 11262).